The sequence spans 353 residues: Uroporphyrinogen decarboxylase (353 aa).

Substrate is bound by residues 29 to 33 (RQAGR), D78, Y154, S209, and H322.

The protein belongs to the uroporphyrinogen decarboxylase family. As to quaternary structure, homodimer.

Its subcellular location is the cytoplasm. The catalysed reaction is uroporphyrinogen III + 4 H(+) = coproporphyrinogen III + 4 CO2. It functions in the pathway porphyrin-containing compound metabolism; protoporphyrin-IX biosynthesis; coproporphyrinogen-III from 5-aminolevulinate: step 4/4. Functionally, catalyzes the decarboxylation of four acetate groups of uroporphyrinogen-III to yield coproporphyrinogen-III. The polypeptide is Uroporphyrinogen decarboxylase (Bacillus velezensis (strain DSM 23117 / BGSC 10A6 / LMG 26770 / FZB42) (Bacillus amyloliquefaciens subsp. plantarum)).